Here is a 319-residue protein sequence, read N- to C-terminus: ATP-dependent 6-phosphofructokinase (319 aa).

An ATP-binding site is contributed by Gly11. ADP is bound at residue 21–25; the sequence is RAVVR. ATP-binding positions include 72–73 and 102–105; these read RC and GDGS. Asp103 is a Mg(2+) binding site. 125–127 lines the substrate pocket; it reads TID. The active-site Proton acceptor is Asp127. Arg154 contributes to the ADP binding site. Substrate is bound by residues Arg162 and 169–171; that span reads MGR. Residues 185–187, Arg211, and 213–215 each bind ADP; these read GAE and KLH. Substrate contacts are provided by residues Glu222, Arg243, and 249–252; that span reads HIQR.

This sequence belongs to the phosphofructokinase type A (PFKA) family. ATP-dependent PFK group I subfamily. Prokaryotic clade 'B1' sub-subfamily. In terms of assembly, homotetramer. It depends on Mg(2+) as a cofactor.

Its subcellular location is the cytoplasm. The catalysed reaction is beta-D-fructose 6-phosphate + ATP = beta-D-fructose 1,6-bisphosphate + ADP + H(+). The protein operates within carbohydrate degradation; glycolysis; D-glyceraldehyde 3-phosphate and glycerone phosphate from D-glucose: step 3/4. Its activity is regulated as follows. Allosterically activated by ADP and other diphosphonucleosides, and allosterically inhibited by phosphoenolpyruvate. In terms of biological role, catalyzes the phosphorylation of D-fructose 6-phosphate to fructose 1,6-bisphosphate by ATP, the first committing step of glycolysis. In Alkaliphilus metalliredigens (strain QYMF), this protein is ATP-dependent 6-phosphofructokinase.